The following is a 200-amino-acid chain: ADP-ribosylation factor-like protein 4A (200 aa).

Gly-2 carries the N-myristoyl glycine lipid modification. GTP is bound by residues 27 to 34 (GLDCAGKT), 75 to 79 (DVGGQ), and 134 to 137 (NKQD).

It belongs to the small GTPase superfamily. Arf family. In terms of assembly, interacts with CYTH2. Interacts with KPNA2; the interaction is direct. Does not interact with ARL4A. In terms of processing, myristoylated. In terms of tissue distribution, expressed strongly in testis and liver. Expressed slightly in heart, spleen, lung and kidney.

Its subcellular location is the cell membrane. The protein localises to the cytoplasm. The protein resides in the nucleus. It localises to the nucleolus. Its function is as follows. Small GTP-binding protein which cycles between an inactive GDP-bound and an active GTP-bound form, and the rate of cycling is regulated by guanine nucleotide exchange factors (GEF) and GTPase-activating proteins (GAP). GTP-binding protein that does not act as an allosteric activator of the cholera toxin catalytic subunit. Recruits CYTH1, CYTH2, CYTH3 and CYTH4 to the plasma membrane in GDP-bound form. This is ADP-ribosylation factor-like protein 4A (Arl4a) from Mus musculus (Mouse).